The chain runs to 278 residues: Betaine--homocysteine S-methyltransferase 1 (278 aa).

Residues Lys11–Arg278 form the Hcy-binding domain. Lys40, Lys93, and Lys98 each carry N6-succinyllysine. Cys217 serves as a coordination point for Zn(2+). 2 positions are modified to N6-succinyllysine: Lys232 and Lys241.

As to quaternary structure, homotetramer. Zn(2+) serves as cofactor. As to expression, found exclusively in liver and kidney.

Its subcellular location is the cytoplasm. The protein localises to the cytosol. It is found in the nucleus. It carries out the reaction L-homocysteine + glycine betaine = N,N-dimethylglycine + L-methionine. The protein operates within amine and polyamine degradation; betaine degradation; sarcosine from betaine: step 1/2. It functions in the pathway amino-acid biosynthesis; L-methionine biosynthesis via de novo pathway; L-methionine from L-homocysteine (BhmT route): step 1/1. Inhibited by dimethylglycine and methylthioacetate. Involved in the regulation of homocysteine metabolism. Converts betaine and homocysteine to dimethylglycine and methionine, respectively. This reaction is also required for the irreversible oxidation of choline. The chain is Betaine--homocysteine S-methyltransferase 1 from Sus scrofa (Pig).